A 604-amino-acid polypeptide reads, in one-letter code: Kelch-like protein 15 (604 aa).

One can recognise a BTB domain in the interval 31–98 (LDVTLVIEDH…MYYGTIELSM (68 aa)). The BACK domain occupies 133–237 (CAEIMRLLDD…TPTSVFEKVK (105 aa)). Kelch repeat units follow at residues 328 to 379 (FVFL…VIGK), 381 to 426 (IYAV…VLNN), 428 to 473 (LFIT…NKSK), 489 to 542 (KLYV…VLDK), and 544 to 590 (IMVL…VCNL).

In terms of assembly, homodimer. Dimerization does not affect PPP2R5B-binding, but is required for its proteasomal degradation. Interacts with CUL3. Directly interacts with PPP2R5B; this interaction leads to PPP2R5B proteasomal degradation. Interacts with RBBP8/CtIP; this interaction leads to RBBP8 proteasomal degradation. Interacts with PACMP micropeptide; interaction prevents ubiquitination and degradation of RBBP8/CtIP.

It is found in the nucleus. It functions in the pathway protein modification; protein ubiquitination. Its function is as follows. Substrate-specific adapter for CUL3 E3 ubiquitin-protein ligase complex. Acts as an adapter for CUL3 to target the serine/threonine-protein phosphatase 2A (PP2A) subunit PPP2R5B for ubiquitination and subsequent proteasomal degradation, thus promoting exchange with other regulatory subunits. Acts as an adapter for CUL3 to target the DNA-end resection factor RBBP8/CtIP for ubiquitination and subsequent proteasomal degradation. Through the regulation of RBBP8/CtIP protein turnover, plays a key role in DNA damage response, favoring DNA double-strand repair through error-prone non-homologous end joining (NHEJ) over error-free, RBBP8-mediated homologous recombination (HR). The protein is Kelch-like protein 15 (KLHL15) of Homo sapiens (Human).